Here is a 323-residue protein sequence, read N- to C-terminus: Acetyl-coenzyme A carboxylase carboxyl transferase subunit alpha (323 aa).

Positions R39 to Q293 constitute a CoA carboxyltransferase C-terminal domain.

It belongs to the AccA family. Acetyl-CoA carboxylase is a heterohexamer composed of biotin carboxyl carrier protein (AccB), biotin carboxylase (AccC) and two subunits each of ACCase subunit alpha (AccA) and ACCase subunit beta (AccD).

The protein resides in the cytoplasm. It catalyses the reaction N(6)-carboxybiotinyl-L-lysyl-[protein] + acetyl-CoA = N(6)-biotinyl-L-lysyl-[protein] + malonyl-CoA. It participates in lipid metabolism; malonyl-CoA biosynthesis; malonyl-CoA from acetyl-CoA: step 1/1. In terms of biological role, component of the acetyl coenzyme A carboxylase (ACC) complex. First, biotin carboxylase catalyzes the carboxylation of biotin on its carrier protein (BCCP) and then the CO(2) group is transferred by the carboxyltransferase to acetyl-CoA to form malonyl-CoA. The polypeptide is Acetyl-coenzyme A carboxylase carboxyl transferase subunit alpha (Paraburkholderia phytofirmans (strain DSM 17436 / LMG 22146 / PsJN) (Burkholderia phytofirmans)).